The following is a 566-amino-acid chain: Sorting nexin lst-4 (566 aa).

One can recognise an SH3 domain in the interval 1-61 (MAQVKAEYDF…PESYVTPYQA (61 aa)). Residues 59 to 179 (YQASRPPPVL…DRGSNKVNKN (121 aa)) form a disordered region. The span at 63 to 77 (RPPPVLPPPLPPTSS) shows a compositional bias: pro residues. Residues 127-140 (DDFDDEWTDEDDEQ) are compositionally biased toward acidic residues. The segment covering 143–154 (TRPNVQSSIGSN) has biased composition (polar residues). Positions 155 to 173 (SRRDLSRSHSEHGGPDRGS) are enriched in basic and acidic residues. One can recognise a PX domain in the interval 227-339 (YTCIVDKPKK…HFISCTDEKD (113 aa)). The BAR domain maps to 362–566 (TVPHQPLDPN…KLTSLAARYD (205 aa)).

The protein belongs to the sorting nexin family. As to quaternary structure, homodimer. Isoform d interacts (via SH3 domain) with dyn-1. Expressed in vulval precursor cells (VPCs) and apoptotic germ cells. Colocalizes with actin, dyn-1 and rab-5 in early phagosomes.

It localises to the cytoplasm. Its subcellular location is the cytoplasmic vesicle. The protein localises to the phagosome membrane. Its function is as follows. Involved in the signaling of vulval development by acting as a negative regulator of epidermal growth factor receptor (EGFR) signaling. Aids in phagosomal membrane tubule formation which is required for phagosomal fusion with endosomes and lysosomes. Also recruits rab-7 to phagosomes by an interaction with dyn-1. These are events leading to phagosome maturation which is a step in apoptotic cell corpse clearance. Binds phosphatidylinositol-3,4,5-trisphosphate. The protein is Sorting nexin lst-4 of Caenorhabditis elegans.